The following is a 443-amino-acid chain: tRNA modification GTPase MnmE (443 aa).

3 residues coordinate (6S)-5-formyl-5,6,7,8-tetrahydrofolate: Arg-19, Glu-78, and Lys-118. Residues 214–366 form the TrmE-type G domain; that stretch reads GFKIAIIGPT…LISKIKNKLK (153 aa). Asn-224 is a binding site for K(+). GTP-binding positions include 224–229, 243–249, and 268–271; these read NAGKSS, SEIAGTT, and DTAG. Ser-228 contacts Mg(2+). K(+)-binding residues include Ser-243, Ile-245, and Thr-248. Thr-249 is a binding site for Mg(2+). Lys-443 serves as a coordination point for (6S)-5-formyl-5,6,7,8-tetrahydrofolate.

It belongs to the TRAFAC class TrmE-Era-EngA-EngB-Septin-like GTPase superfamily. TrmE GTPase family. As to quaternary structure, homodimer. Heterotetramer of two MnmE and two MnmG subunits. Requires K(+) as cofactor.

The protein localises to the cytoplasm. Its function is as follows. Exhibits a very high intrinsic GTPase hydrolysis rate. Involved in the addition of a carboxymethylaminomethyl (cmnm) group at the wobble position (U34) of certain tRNAs, forming tRNA-cmnm(5)s(2)U34. This is tRNA modification GTPase MnmE from Pelagibacter ubique (strain HTCC1062).